Reading from the N-terminus, the 240-residue chain is Zinc import ATP-binding protein ZnuC (240 aa).

The ABC transporter domain maps to 1-219; the sequence is MSLLSIAALD…PAYRAMFGLD (219 aa). Position 36 to 43 (36 to 43) interacts with ATP; sequence GPNGSGKT.

Belongs to the ABC transporter superfamily. Zinc importer (TC 3.A.1.15.5) family. The complex is composed of two ATP-binding proteins (ZnuC), two transmembrane proteins (ZnuB) and a solute-binding protein (ZnuA).

The protein localises to the cell inner membrane. It carries out the reaction Zn(2+)(out) + ATP(in) + H2O(in) = Zn(2+)(in) + ADP(in) + phosphate(in) + H(+)(in). Functionally, part of the ABC transporter complex ZnuABC involved in zinc import. Responsible for energy coupling to the transport system. This chain is Zinc import ATP-binding protein ZnuC, found in Chromohalobacter salexigens (strain ATCC BAA-138 / DSM 3043 / CIP 106854 / NCIMB 13768 / 1H11).